The following is a 529-amino-acid chain: MNNRGNNDDLDHHYGVFNDFERRMTSRKKSVLDNTSPMIWKTVSERKSSPGIEGLNLSSFDRPMAPTTEIRELRVFLATWNVGGRTPNNDLNLEDFLLVEGTADLYICGFQEIVPLSAGNVLVVEDNEPAAKWLALISQALNKPKQESVYSNAAYSASRTTTCSSSSCGSEESRAPSSLSFFQRPNLKVLSRNYRVDSSLLKTCNCPVIDTSVGWEARRSKRFSDPSTDSSNNVEPENFRVHENFLFDDVPATTKMPGQMSYRLIASKQMVGLFLSVWARRELIPHISHLRLDSVGRGIMGRLGNKGCIAISMSLHQTSFCFVCSHLASGEKEGDELRRNADVAEILKHTQFPKLTKNPNCHAPERIIDHDRVLWLGDLNYRVALTYEETRVLLEDNDWDTLLERDQLNMERGAGRVFSGFQEGQIFFAPTYKYSQNSDAYAGEMTKSKKKRRTPAWCDRILWKGEGIEQLSYIRGESRFSDHRPVCAIFAVEVDVKSLNKGRFRKGYSCAAVRLVEDVAIPQRHSFYD.

Catalytic regions lie at residues 371-386 (DRVLWLGDLNYRVALT) and 451-466 (KRRTPAWCDRILWKGE).

This sequence belongs to the inositol polyphosphate 5-phosphatase family.

Functionally, may be involved in the regulation of root hairs development. Required for restricting both the size of the root-hair initiation site and the width of the root hairs during the transition to tip growth, but is not required for normal subsequent tip growth. In Arabidopsis thaliana (Mouse-ear cress), this protein is Type I inositol polyphosphate 5-phosphatase 5.